A 211-amino-acid chain; its full sequence is Prolactin-3C1 (211 aa).

An N-terminal signal peptide occupies residues 1 to 29; sequence MQLSLTQARTWKGLLLLVSCMILWISVTP. N-linked (GlcNAc...) asparagine glycosylation is found at Asn-77 and Asn-173. Residues Cys-80 and Cys-187 are joined by a disulfide bond.

Belongs to the somatotropin/prolactin family. In terms of tissue distribution, expressed exclusively in decidual tissue.

It localises to the secreted. This chain is Prolactin-3C1 (Prl3c1), found in Rattus norvegicus (Rat).